Reading from the N-terminus, the 224-residue chain is Ribose-5-phosphate isomerase A (224 aa).

Substrate-binding positions include 33-36, 86-89, and 99-102; these read TGST, DGAD, and KGGG. Glu-108 acts as the Proton acceptor in catalysis. Lys-126 lines the substrate pocket.

Belongs to the ribose 5-phosphate isomerase family. In terms of assembly, homodimer.

It catalyses the reaction aldehydo-D-ribose 5-phosphate = D-ribulose 5-phosphate. The protein operates within carbohydrate degradation; pentose phosphate pathway; D-ribose 5-phosphate from D-ribulose 5-phosphate (non-oxidative stage): step 1/1. Functionally, catalyzes the reversible conversion of ribose-5-phosphate to ribulose 5-phosphate. This chain is Ribose-5-phosphate isomerase A, found in Bordetella avium (strain 197N).